The chain runs to 105 residues: MSSAATKPVKRSGIIKGFNKGHAVAKRTVTSTFKKQVVTKRVAAIRDVIREISGFSPYERRVSELLKSGLDKRALKVAKKRLGSIQAGKKKRDDIANINRKASAK.

The tract at residues 86–105 is disordered; the sequence is QAGKKKRDDIANINRKASAK.

Belongs to the eukaryotic ribosomal protein eL36 family.

This chain is Large ribosomal subunit protein eL36 (rpl36), found in Dictyostelium discoideum (Social amoeba).